The chain runs to 704 residues: Metabotropic glutamate receptor-like protein K (704 aa).

A signal peptide spans 1–21 (MIKLILSIILIICFIINSIES). Over 22–383 (FKMITLTTGP…SKVEFQRSIQ (362 aa)) the chain is Extracellular. N-linked (GlcNAc...) asparagine glycosylation is found at Asn66, Asn104, Asn256, Asn286, Asn308, Asn337, Asn343, and Asn368. The helical transmembrane segment at 384-404 (IGFSIVSGLLIGFVILMMIGI) threads the bilayer. Over 405–419 (VKYQDTPSIRSASPS) the chain is Cytoplasmic. A helical membrane pass occupies residues 420-440 (FLNLTLLGGVIIFIGIIVWVA). Residues 441-455 (PISTHQCNARFWLVT) are Extracellular-facing. Residues 456-476 (IGFSTLIGSLVVKNIRIWLIF) form a helical membrane-spanning segment. Residues 477-492 (DNPELKIRTITNNQLY) lie on the Cytoplasmic side of the membrane. A helical transmembrane segment spans residues 493–513 (PWVGLCLVINIVLMSIITTVG). The Extracellular segment spans residues 514 to 541 (DLKAIEAQGIDSLGKFEYMTICKMNYTG). A glycan (N-linked (GlcNAc...) asparagine) is linked at Asn538. The helical transmembrane segment at 542–562 (AATLYSILAYFGTLLLVGVFV) threads the bilayer. The Cytoplasmic segment spans residues 563-578 (SWKIRIVHIEEFSECT). A helical transmembrane segment spans residues 579–599 (AIAKTLYSISFCLFVIVPLMI). Over 600–608 (SPQDKQSET) the chain is Extracellular. The helical transmembrane segment at 609 to 629 (IILCVTGIFITTGALLIFFLP) threads the bilayer. Topologically, residues 630–704 (KFWRIFGNEK…NESSLSNETK (75 aa)) are cytoplasmic. 2 disordered regions span residues 657–677 (ARAE…SKSS) and 685–704 (SGIE…NETK).

It in the N-terminal section; belongs to the BMP lipoprotein family. The protein in the C-terminal section; belongs to the G-protein coupled receptor 3 family. GABA-B receptor subfamily.

It is found in the membrane. This is Metabotropic glutamate receptor-like protein K (grlK) from Dictyostelium discoideum (Social amoeba).